The chain runs to 754 residues: Nitrate reductase (754 aa).

A signal peptide (tat-type signal) is located at residues 1–31 (MKFTRRSFVKASALATAMVAAGCSPQPVAPK). In terms of domain architecture, 4Fe-4S Mo/W bis-MGD-type spans 39–95 (ATWYKTVCRYCGVGCGVMVAAKDNRVVAVKGDTENPVNKGLLCVKGYYLDRIMNTEE). Residues Cys46, Cys49, Cys53, and Cys81 each contribute to the [4Fe-4S] cluster site. Residues Lys83, Gln144, Asn169, Cys173, 256-258 (GTD), Met341, Gln345, Asn451, Lys497, Asp524, 642-651 (TGRILEHWHT), Asn728, and Lys745 contribute to the Mo-bis(molybdopterin guanine dinucleotide) site.

This sequence belongs to the prokaryotic molybdopterin-containing oxidoreductase family. NasA/NapA/NarB subfamily. As to quaternary structure, component of the nitrate reductase NapAB complex composed of NapA and NapB. [4Fe-4S] cluster is required as a cofactor. Requires Mo-bis(molybdopterin guanine dinucleotide) as cofactor. Predicted to be exported by the Tat system. The position of the signal peptide cleavage has not been experimentally proven.

It is found in the secreted. The catalysed reaction is 2 Fe(II)-[cytochrome] + nitrate + 2 H(+) = 2 Fe(III)-[cytochrome] + nitrite + H2O. In terms of biological role, catalytic subunit of the nitrate reductase complex NapAB. Receives electrons from NapB and catalyzes the reduction of nitrate to nitrite. The protein is Nitrate reductase of Symbiobacterium thermophilum (strain DSM 24528 / JCM 14929 / IAM 14863 / T).